The following is a 294-amino-acid chain: MNGVINIYKNTGMTSFDVVAMVRRVAKMKKVGHTGTLDPEASGVLPVCLGKATKIIDYIMENKKVYRVNLKLGMVTDTYDLEGEVLREEDASHITKDEILNCINSFVGTIDQVPPMYSALKQNGVRLYELARQGIEVHREARKITIYSIENIKIESNDNIQMDVCCSKGTYIRSLCYDIGEKLNVGATMTALERIQNGPFIKEEAINIEDLTEELLEKHIISIEKALDSFEKITVNEKFGKLLRNGVKVFDNRMYSEEVEFNKLYRVYEDNGVFLGLGKRDEKGFKLEKLLIEE.

Aspartate 38 functions as the Nucleophile in the catalytic mechanism.

This sequence belongs to the pseudouridine synthase TruB family. Type 1 subfamily.

It carries out the reaction uridine(55) in tRNA = pseudouridine(55) in tRNA. In terms of biological role, responsible for synthesis of pseudouridine from uracil-55 in the psi GC loop of transfer RNAs. The protein is tRNA pseudouridine synthase B of Clostridium perfringens (strain SM101 / Type A).